The sequence spans 941 residues: Pre-mRNA-processing factor 6 (941 aa).

Positions 1–79 (MNKKKKPFLG…DEDLNDTNYD (79 aa)) are disordered. Basic and acidic residues predominate over residues 39-65 (DANDPVDDRHAPPGKRTVGDQMKKNQA). Residues 66 to 78 (ADDDDEDLNDTNY) show a composition bias toward acidic residues. Ser143 carries the phosphoserine modification. Phosphothreonine is present on residues Thr180, Thr266, and Thr275. Ser279 carries the phosphoserine modification. 9 HAT repeats span residues 384 to 416 (TDIR…LEEP), 418 to 444 (DARI…ARLE), 445 to 476 (TYEN…LEEA), 554 to 586 (NALE…FGKN), 588 to 620 (GTRE…SKWL), 622 to 654 (GDVP…LESE), 689 to 721 (DNIR…IEEQ), 723 to 755 (EMME…LEEK), and 855 to 887 (RKIT…FELQ).

Identified in the spliceosome B complex. Identified in the spliceosome C complex. Associates with the U5 snRNP particle. Component of the U4/U6-U5 tri-snRNP complex composed of the U4, U6 and U5 snRNAs and at least PRPF3, PRPF4, PRPF6, PRPF8, PRPF31, SNRNP200, TXNL4A, SNRNP40, DDX23, CD2BP2, PPIH, SNU13, EFTUD2, SART1 and USP39, LSm proteins LSm2-8 and Sm proteins. Interacts with ARAF1. Interacts with AR and NR3C1, but not ESR1, independently of the presence of hormones. Interacts with USH1G. Post-translationally, phosphorylated by PRP4K during spliceosome assembly.

The protein localises to the nucleus. Its subcellular location is the nucleoplasm. It is found in the nucleus speckle. In terms of biological role, involved in pre-mRNA splicing as component of the U4/U6-U5 tri-snRNP complex, one of the building blocks of the spliceosome. Enhances dihydrotestosterone-induced transactivation activity of AR, as well as dexamethasone-induced transactivation activity of NR3C1, but does not affect estrogen-induced transactivation. The protein is Pre-mRNA-processing factor 6 (PRPF6) of Pongo abelii (Sumatran orangutan).